The primary structure comprises 370 residues: GMP synthase [glutamine-hydrolyzing] subunit B (370 aa).

Residues 3–189 (FDPQKFVDEI…LGLPRDIYNR (187 aa)) form the GMPS ATP-PPase domain. 29–35 (SGGVDST) is a binding site for ATP.

As to quaternary structure, heterodimer composed of a glutamine amidotransferase subunit (A) and a GMP-binding subunit (B).

The enzyme catalyses XMP + L-glutamine + ATP + H2O = GMP + L-glutamate + AMP + diphosphate + 2 H(+). It participates in purine metabolism; GMP biosynthesis; GMP from XMP (L-Gln route): step 1/1. Catalyzes the synthesis of GMP from XMP. This chain is GMP synthase [glutamine-hydrolyzing] subunit B (guaAB), found in Sulfurisphaera tokodaii (strain DSM 16993 / JCM 10545 / NBRC 100140 / 7) (Sulfolobus tokodaii).